A 745-amino-acid chain; its full sequence is Junction plakoglobin (745 aa).

M1 bears the N-acetylmethionine mark. Residue T14 is glycosylated (O-linked (GlcNAc) threonine). 2 positions are modified to phosphoserine: S99 and S125. ARM repeat units follow at residues 132–171 (NYQD…QLSK), 172–215 (KEAS…LSHH), 216–255 (REGL…NLLL), 258–297 (EGAK…LLAY), 298–341 (GNQE…LSVC), 342–381 (PSNK…NLSD), 383–420 (ATKQ…NLTC), 423–464 (SKNK…HLTS), 470–510 (EMAQ…NLAL), 512–551 (PANH…QPYT), 574–613 (PMNR…ELAQ), and 615–661 (KEAA…PDYR). Residues 132 to 297 (NYQDDAELAT…TTDCLQLLAY (166 aa)) are interaction with DSC1 and DSG1. S182 carries the post-translational modification Phosphoserine. An interaction with DSC1 region spans residues 574–661 (PMNRMEIFRL…ISEDKNPDYR (88 aa)). 2 positions are modified to phosphoserine: S665 and S730.

This sequence belongs to the beta-catenin family. Homodimer. Component of an E-cadherin/catenin adhesion complex composed of at least E-cadherin/CDH1 and gamma-catenin/JUP, and possibly alpha-catenin/CTNNA1; the complex is located to adherens junctions. The stable association of CTNNA1 is controversial as CTNNA1 was shown not to bind to F-actin when assembled in the complex. Interacts with MUC1. Interacts with CAV1. Interacts with PTPRJ. Interacts with DSG1. Interacts with DSC1 and DSC2. Interacts with PKP2. Interacts with PKP3 (via N-terminus); the interaction is required for PKP3 localization to desmosome cell-cell junctions. Interacts with DSG4. Post-translationally, may be phosphorylated by FER. In terms of tissue distribution, expressed in the mammary epithelium (at protein level).

It localises to the cell junction. The protein localises to the adherens junction. It is found in the desmosome. The protein resides in the cytoplasm. Its subcellular location is the cytoskeleton. It localises to the cell membrane. The protein localises to the nucleus. In terms of biological role, common junctional plaque protein. The membrane-associated plaques are architectural elements in an important strategic position to influence the arrangement and function of both the cytoskeleton and the cells within the tissue. The presence of plakoglobin in both the desmosomes and in the intermediate junctions suggests that it plays a central role in the structure and function of submembranous plaques. Acts as a substrate for VE-PTP and is required by it to stimulate VE-cadherin function in endothelial cells. Can replace beta-catenin in E-cadherin/catenin adhesion complexes which are proposed to couple cadherins to the actin cytoskeleton. The polypeptide is Junction plakoglobin (Mus musculus (Mouse)).